A 388-amino-acid chain; its full sequence is Na(+)/H(+) antiporter NhaA (388 aa).

The Cytoplasmic segment spans residues 1-11; the sequence is MKHLHRFFSSD. Residues 12 to 31 form a helical membrane-spanning segment; it reads ASGGIILIIAAVLAMIMANS. Over 32 to 58 the chain is Periplasmic; the sequence is GATSGWYHDFLETPVQLRVGTLEINKN. Residues 59 to 80 form a helical membrane-spanning segment; sequence MLLWINDALMAVFFLLVGLEVK. Residues 81–96 lie on the Cytoplasmic side of the membrane; that stretch reads RELMQGSLASLRQAAF. The helical transmembrane segment at 97–116 threads the bilayer; that stretch reads PVIAAIGGMIVPALLYLAFN. The Periplasmic portion of the chain corresponds to 117–122; sequence YADPIT. A helical membrane pass occupies residues 123–130; it reads REGWAIPA. The Cytoplasmic portion of the chain corresponds to 131-154; it reads ATDIAFALGVLALLGSRVPLALKI. The helical transmembrane segment at 155 to 176 threads the bilayer; it reads FLMALAIIDDLGAIIIIALFYT. The Periplasmic portion of the chain corresponds to 177–180; that stretch reads NDLS. A helical transmembrane segment spans residues 181–200; the sequence is MASLGVAAVAIAVLAVLNLC. Residues 201–204 lie on the Cytoplasmic side of the membrane; sequence GVRR. The helical transmembrane segment at 205 to 222 threads the bilayer; it reads TGVYILVGVVLWTAVLKS. Residue G223 is a topological domain, periplasmic. The helical transmembrane segment at 224–236 threads the bilayer; that stretch reads VHATLAGVIVGFF. Residues 237–253 lie on the Cytoplasmic side of the membrane; that stretch reads IPLKEKHGRSPAKRLEH. Residues 254 to 272 traverse the membrane as a helical segment; it reads VLHPWVAYLILPLFAFANA. Residues 273–286 lie on the Periplasmic side of the membrane; it reads GVSLQGVTLEGLTS. The helical transmembrane segment at 287 to 310 threads the bilayer; it reads ILPLGIIAGLLIGKPLGISLFCWL. At 311-339 the chain is on the cytoplasmic side; it reads ALRLKLAHLPEGTTYQQIMAVGILCGIGF. The chain crosses the membrane as a helical span at residues 340–350; that stretch reads TMSIFIASLAF. Topologically, residues 351–357 are periplasmic; sequence GSVDPEL. A helical membrane pass occupies residues 358-380; that stretch reads INWAKLGILVGSISSAVIGYSWL. Residues 381–388 are Cytoplasmic-facing; it reads RVRLRPSV.

This sequence belongs to the NhaA Na(+)/H(+) (TC 2.A.33) antiporter family.

It is found in the cell inner membrane. It carries out the reaction Na(+)(in) + 2 H(+)(out) = Na(+)(out) + 2 H(+)(in). Functionally, na(+)/H(+) antiporter that extrudes sodium in exchange for external protons. This chain is Na(+)/H(+) antiporter NhaA, found in Escherichia coli O6:K15:H31 (strain 536 / UPEC).